We begin with the raw amino-acid sequence, 172 residues long: Envelope protein UL45 (172 aa).

Residues 1–27 lie on the Intravirion side of the membrane; the sequence is MPLRASEHAYRPLGPGTPPVRARLPAA. Residues 28-48 traverse the membrane as a helical; Signal-anchor for type II membrane protein segment; that stretch reads AWVGVGTIIGGVVIIAALVLV. The Virion surface portion of the chain corresponds to 49–172; the sequence is PSRASWALSP…TSTRNALGLP (124 aa).

It belongs to the herpesviridae HHV-1 UL45 family.

It is found in the virion membrane. Important virulence factor of HSV neurotropism. Seems to be required for glycoprotein B-induced fusion. Dispensable for growth in vitro. The chain is Envelope protein UL45 from Homo sapiens (Human).